We begin with the raw amino-acid sequence, 143 residues long: Glutamyl-tRNA(Gln) amidotransferase subunit C, chloroplastic/mitochondrial (143 aa).

This sequence belongs to the GatC family. As to quaternary structure, subunit of the heterotrimeric GatCAB amidotransferase (AdT) complex, composed of A, B and C subunits.

Its subcellular location is the mitochondrion. The protein resides in the plastid. It is found in the chloroplast. It carries out the reaction L-glutamyl-tRNA(Gln) + L-glutamine + ATP + H2O = L-glutaminyl-tRNA(Gln) + L-glutamate + ADP + phosphate + H(+). Allows the formation of correctly charged Gln-tRNA(Gln) through the transamidation of misacylated Glu-tRNA(Gln) in chloroplasts and mitochondria. The reaction takes place in the presence of glutamine and ATP through an activated gamma-phospho-Glu-tRNA(Gln). This is Glutamyl-tRNA(Gln) amidotransferase subunit C, chloroplastic/mitochondrial from Ricinus communis (Castor bean).